Consider the following 429-residue polypeptide: Enolase (429 aa).

Gln165 contributes to the (2R)-2-phosphoglycerate binding site. The active-site Proton donor is the Glu207. Residues Asp244, Glu287, and Asp314 each contribute to the Mg(2+) site. Residues Lys339, Arg368, Ser369, and Lys390 each contribute to the (2R)-2-phosphoglycerate site. The Proton acceptor role is filled by Lys339.

The protein belongs to the enolase family. Mg(2+) is required as a cofactor.

It is found in the cytoplasm. It localises to the secreted. The protein resides in the cell surface. The catalysed reaction is (2R)-2-phosphoglycerate = phosphoenolpyruvate + H2O. It functions in the pathway carbohydrate degradation; glycolysis; pyruvate from D-glyceraldehyde 3-phosphate: step 4/5. Catalyzes the reversible conversion of 2-phosphoglycerate (2-PG) into phosphoenolpyruvate (PEP). It is essential for the degradation of carbohydrates via glycolysis. This is Enolase from Roseiflexus sp. (strain RS-1).